We begin with the raw amino-acid sequence, 108 residues long: Large ribosomal subunit protein uL23 (108 aa).

It belongs to the universal ribosomal protein uL23 family. Part of the 50S ribosomal subunit. Contacts protein L29, and trigger factor when it is bound to the ribosome.

One of the early assembly proteins it binds 23S rRNA. One of the proteins that surrounds the polypeptide exit tunnel on the outside of the ribosome. Forms the main docking site for trigger factor binding to the ribosome. The chain is Large ribosomal subunit protein uL23 from Polaromonas sp. (strain JS666 / ATCC BAA-500).